Here is a 383-residue protein sequence, read N- to C-terminus: Probable indole-3-pyruvate monooxygenase YUCCA10 (383 aa).

Position 9 to 14 (9 to 14) interacts with FAD; the sequence is GAGPAG. NADP(+) is bound at residue 177–182; that stretch reads GGGNSG.

The protein belongs to the FMO family. The cofactor is FAD.

It carries out the reaction indole-3-pyruvate + NADPH + O2 + H(+) = (indol-3-yl)acetate + CO2 + NADP(+) + H2O. It functions in the pathway plant hormone metabolism; auxin biosynthesis. Its function is as follows. Involved in auxin biosynthesis. In Arabidopsis thaliana (Mouse-ear cress), this protein is Probable indole-3-pyruvate monooxygenase YUCCA10 (YUC10).